We begin with the raw amino-acid sequence, 228 residues long: MTQPLDDAASAIFGPRLELAQRYADWLATAGVERGLLGPREVDRLWERHVLNSAVIGELLDQGERVVDIGSGAGLPGLPLAIARPDLQVVLLEPMLRRVEFLQEVVTDLGLAVEVVRGRAEERSVRERLGGSDAAVSRAVAALDKLTKWSMPLLKREGRMLAIKGERAPDEVREHRRVMESLGAADVRVVPCGANYLQPPATVVVARRGDTRGPNRRVSPRRTGGAPA.

Residues glycine 70, leucine 75, 120-121 (AE), and arginine 138 each bind S-adenosyl-L-methionine. The segment at 207–228 (RRGDTRGPNRRVSPRRTGGAPA) is disordered.

The protein belongs to the methyltransferase superfamily. RNA methyltransferase RsmG family.

It is found in the cytoplasm. Specifically methylates the N7 position of guanine in position 518 of 16S rRNA. This is Ribosomal RNA small subunit methyltransferase G from Mycobacterium marinum (strain ATCC BAA-535 / M).